Reading from the N-terminus, the 442-residue chain is Xaa-Pro dipeptidase (442 aa).

Residues aspartate 245, aspartate 256, histidine 338, glutamate 383, and glutamate 422 each coordinate Mn(2+).

Belongs to the peptidase M24B family. Bacterial-type prolidase subfamily. Requires Mn(2+) as cofactor.

It catalyses the reaction Xaa-L-Pro dipeptide + H2O = an L-alpha-amino acid + L-proline. Splits dipeptides with a prolyl residue in the C-terminal position. The chain is Xaa-Pro dipeptidase from Sodalis glossinidius (strain morsitans).